The primary structure comprises 583 residues: MSQSLHFSPNLTFAKQPFPKLPLPFPTSNSRYPVNNYKSLSIKASTSPSSSSDPQVLVADNGTGNSGVLYNNNNKSVTVSDPSSIEVDAVTETELKENGFRSTRRTKLVCTIGPATCGFEELEALAVGGMNVARINMCHGTREWHKSVIERVRRLNEEKGFAVAIMMDTEGSEIHMGDLGGASSAKAEDGEIWTFSVRAYDSPRPERTINVNYDGFAEDVKVGDELLVDGGMVRFEVIEKIGPDVKCRCTDPGLLLPRANLTFWRDGSLVRERNAMLPTISSKDWLDIDFGIAEGVDFIAISFVKSAEVINHLKSYIAARSRDSDIAVIAKIESIDSLKNLEEIIRASDGAMVARGDLGAQIPLEQVPSAQQNIVQVCRQLNKPVIVASQLLESMIEYPTPTRAEVADVSEAVRQRADALMLSGESAMGQYPEKALAVLRSVSVRIEKWWREEKHHEAMELPAIGSTYSDSISEEICNSAAKMANNLGVDALFVYTKDGHMASLLSRCRPDCPIFAFTTTTSVRRRLNLQWGLIPFRLSFADDMESNLNKTFSLLKARGMIKSGDLVIAVSDMLQSIQVMNVP.

Residues 1 to 74 (MSQSLHFSPN…NSGVLYNNNN (74 aa)) constitute a chloroplast transit peptide. Over residues 43–52 (KASTSPSSSS) the composition is skewed to low complexity. The interval 43 to 75 (KASTSPSSSSDPQVLVADNGTGNSGVLYNNNNK) is disordered. The span at 62 to 75 (GTGNSGVLYNNNNK) shows a compositional bias: polar residues. Residue R134 participates in substrate binding. K(+) contacts are provided by N136, D168, and T169. 136 to 139 (NMCH) lines the ATP pocket. E333 contacts Mg(2+). Substrate-binding residues include G356, D357, and S389. Residue D357 participates in Mg(2+) binding.

This sequence belongs to the pyruvate kinase family. As to quaternary structure, oligomer of alpha and beta subunits. It depends on Mg(2+) as a cofactor. The cofactor is K(+).

The protein localises to the plastid. The protein resides in the chloroplast. The catalysed reaction is pyruvate + ATP = phosphoenolpyruvate + ADP + H(+). It functions in the pathway carbohydrate degradation; glycolysis; pyruvate from D-glyceraldehyde 3-phosphate: step 5/5. The protein is Pyruvate kinase isozyme A, chloroplastic of Ricinus communis (Castor bean).